Here is a 681-residue protein sequence, read N- to C-terminus: Protein NirI (681 aa).

The first 30 residues, 1–30, serve as a signal peptide directing secretion; sequence MAMPGKSSHAPSRLLLALLTLILLALPARP. The next 5 helical transmembrane spans lie at 394–414, 436–456, 468–488, 535–555, and 568–588; these read IPGI…LFGQ, LVVL…VAFL, FLIE…LLFW, TLFV…LILA, and FLRA…GLFI.

To P.stutzeri NosR.

It localises to the cell membrane. The chain is Protein NirI (nirI) from Paracoccus denitrificans (strain Pd 1222).